A 750-amino-acid chain; its full sequence is Glycerophosphodiester phosphodiesterase GDPDL7 (750 aa).

A signal peptide spans 1 to 17 (MLRFIIFFSLFIHLCVA). 2 GP-PDE domains span residues 41–339 (PAVV…SQSI) and 355–654 (ALVI…TRYL). Residues N134, N304, N603, and N716 are each glycosylated (N-linked (GlcNAc...) asparagine).

This sequence belongs to the glycerophosphoryl diester phosphodiesterase family. Expressed in flowers and siliques.

The enzyme catalyses a sn-glycero-3-phosphodiester + H2O = an alcohol + sn-glycerol 3-phosphate + H(+). This Arabidopsis thaliana (Mouse-ear cress) protein is Glycerophosphodiester phosphodiesterase GDPDL7.